The sequence spans 124 residues: Fluoride-specific ion channel FluC 2 (124 aa).

4 helical membrane passes run 8-28 (LPNQ…GALV), 34-54 (NDLL…GLPF), 60-80 (LLLG…MVEC), and 93-113 (LGLI…GFLI). Na(+) contacts are provided by Gly-68 and Thr-71.

It belongs to the fluoride channel Fluc/FEX (TC 1.A.43) family.

The protein localises to the cell inner membrane. The catalysed reaction is fluoride(in) = fluoride(out). Its activity is regulated as follows. Na(+) is not transported, but it plays an essential structural role and its presence is essential for fluoride channel function. Functionally, fluoride-specific ion channel. Important for reducing fluoride concentration in the cell, thus reducing its toxicity. This Prochlorococcus marinus (strain MIT 9313) protein is Fluoride-specific ion channel FluC 2.